We begin with the raw amino-acid sequence, 234 residues long: MRKPDSKIVLLGDMNVGKTSLLQRYMERRFPDTVSTVGGAFYLKQWRSYNISIWDTAGREQFHGLGSMYCRGAAAIILTYDVNHRQSLVELEDRFLGLTDTASKDCLFAIVGNKVDLTEEGALAGQEKEECSPNMDAGDRVSPRAPKQVQLEDAVALYKKILKYKMLDEQDVPAAEQMCFETSAKTGYNVDLLFETLFDLVVPMILQQRAERPSHTVDISSHKPPKRTRSGCCA.

5 residues coordinate GTP: Gly-17, Lys-18, Thr-19, Asp-32, and Thr-36. Thr-19 lines the Mg(2+) pocket. Short sequence motifs (switch) lie at residues 28 to 41 (RRFP…GGAF) and 55 to 72 (DTAG…YCRG). Residues Thr-36 and Asp-55 each coordinate Mg(2+). Residues Gly-58, Asn-113, Lys-114, and Asp-116 each contribute to the GTP site. The disordered stretch occupies residues 125-144 (GQEKEECSPNMDAGDRVSPR). Residues 126 to 142 (QEKEECSPNMDAGDRVS) show a composition bias toward basic and acidic residues. GTP-binding residues include Ala-184 and Lys-185. The interval 212-234 (RPSHTVDISSHKPPKRTRSGCCA) is disordered. Over residues 223 to 234 (KPPKRTRSGCCA) the composition is skewed to basic residues. Residues Cys-232 and Cys-233 are each lipidated (S-geranylgeranyl cysteine).

It belongs to the small GTPase superfamily. Rab family. It depends on Mg(2+) as a cofactor. Low or absent expression in normal pancreas and stronger expression in 15 of 18 exocrine pancreatic adenocarcinomas (at protein level).

The protein localises to the golgi apparatus. It localises to the cytoplasmic vesicle. The protein resides in the phagosome. It is found in the phagosome membrane. It carries out the reaction GTP + H2O = GDP + phosphate + H(+). With respect to regulation, regulated by guanine nucleotide exchange factors (GEFs) which promote the exchange of bound GDP for free GTP. Regulated by GTPase activating proteins (GAPs) which increase the GTP hydrolysis activity. Inhibited by GDP dissociation inhibitors (GDIs). In terms of biological role, the small GTPases Rab are key regulators of intracellular membrane trafficking, from the formation of transport vesicles to their fusion with membranes. Rabs cycle between an inactive GDP-bound form and an active GTP-bound form that is able to recruit to membranes different sets of downstream effectors directly responsible for vesicle formation, movement, tethering and fusion. RAB20 plays a role in apical endocytosis/recycling. Plays a role in the maturation and acidification of phagosomes that engulf pathogens, such as S.aureus and M.tuberculosis. Plays a role in the fusion of phagosomes with lysosomes. The protein is Ras-related protein Rab-20 of Homo sapiens (Human).